A 383-amino-acid chain; its full sequence is Deoxyhypusine synthase-like protein (383 aa).

The protein belongs to the deoxyhypusine synthase family.

This chain is Deoxyhypusine synthase-like protein, found in Nostoc sp. (strain PCC 7120 / SAG 25.82 / UTEX 2576).